The following is a 241-amino-acid chain: Chloride intracellular channel protein 1 (241 aa).

Ala-2 bears the N-acetylalanine mark. Residues 2–90 (AEEQPQVELF…EEFLEAVLCP (89 aa)) are required for insertion into the membrane. At Lys-13 the chain carries N6-acetyllysine. The short motif at 24–27 (CPFS) is the G-site element. Cys-24 and Cys-59 are disulfide-bonded. Residues 26-46 (FSQRLFMVLWLKGVTFNVTTV) form a helical membrane-spanning segment. One can recognise a GST C-terminal domain in the interval 93–233 (YPKLAALNPE…PDDEEIELAY (141 aa)). Lys-119 is subject to N6-acetyllysine. Ser-121 bears the Phosphoserine mark. Position 131 is an N6-acetyllysine (Lys-131). Phosphoserine is present on residues Ser-156 and Ser-211. Tyr-233 is subject to Phosphotyrosine.

It belongs to the chloride channel CLIC family. Monomer. Homodimer (in vitro). Interacts with TRAPPC2. Dimerization requires a conformation change that leads to the exposure of a large hydrophobic surface. In vivo, this may lead to membrane insertion. In terms of tissue distribution, expressed in neonatal and adult cardiomyocytes (at protein level).

The protein resides in the nucleus. Its subcellular location is the nucleus membrane. It localises to the cytoplasm. The protein localises to the cell membrane. It is found in the endoplasmic reticulum. The catalysed reaction is L-dehydroascorbate + 2 glutathione = glutathione disulfide + L-ascorbate. It catalyses the reaction chloride(in) = chloride(out). The enzyme catalyses iodide(out) = iodide(in). It carries out the reaction thiocyanate(in) = thiocyanate(out). The catalysed reaction is nitrate(in) = nitrate(out). It catalyses the reaction bromide(in) = bromide(out). The enzyme catalyses fluoride(in) = fluoride(out). In the soluble state, catalyzes glutaredoxin-like thiol disulfide exchange reactions with reduced glutathione as electron donor. Reduces selenite and dehydroascorbate and may act as an antioxidant during oxidative stress response. Can insert into membranes and form voltage-dependent multi-ion conductive channels. Membrane insertion seems to be redox-regulated and may occur only under oxidizing conditions. Involved in regulation of the cell cycle. This is Chloride intracellular channel protein 1 from Rattus norvegicus (Rat).